A 486-amino-acid chain; its full sequence is Malonate-semialdehyde dehydrogenase 1 (486 aa).

Positions 154, 178, 181, 182, and 231 each coordinate NAD(+). The active-site Nucleophile is the Cys286. An NAD(+)-binding site is contributed by Glu386.

It belongs to the aldehyde dehydrogenase family. IolA subfamily. As to quaternary structure, homotetramer.

The enzyme catalyses 3-oxopropanoate + NAD(+) + CoA + H2O = hydrogencarbonate + acetyl-CoA + NADH + H(+). The catalysed reaction is 2-methyl-3-oxopropanoate + NAD(+) + CoA + H2O = propanoyl-CoA + hydrogencarbonate + NADH + H(+). It participates in polyol metabolism; myo-inositol degradation into acetyl-CoA; acetyl-CoA from myo-inositol: step 7/7. Catalyzes the oxidation of malonate semialdehyde (MSA) and methylmalonate semialdehyde (MMSA) into acetyl-CoA and propanoyl-CoA, respectively. Is involved in a myo-inositol catabolic pathway. Bicarbonate, and not CO2, is the end-product of the enzymatic reaction. This is Malonate-semialdehyde dehydrogenase 1 from Bacillus anthracis.